We begin with the raw amino-acid sequence, 1077 residues long: MPKRTDIKSILILGAGPIVIGQACEFDYSGAQACKALREEGYRVILVNSNLATIMTDPEMADATYIEPIHWEVVRKIIEKERPDAVLPTMGGQTALNCALELERQGVLAEFGVTMIGATADAIDKAEDRRRFDIAMKKIGLDTARSGIAHNMEEALAVAADVGFPCIIRPSFTMGGTGGGIAYNREEFEEICERGLDLSPTKELLIDESLIGWKEYEMEVVRDKNDNCIIVCSIENFDAMGIHTGDSITVAPAQTLTDKEYQIMRNASMAVLREIGVETGGSNVQFSVNPKNGRLIVIEMNPRVSRSSALASKATGFPIAKIAAKLAVGYTLDELMNDITGGRTPASFEPSIDYVVTKIPRFNFEKFAGANDRLTTQMKSVGEVMAIGRTQQESLQKALRGLEVGATGFDPKVSLDDPEALTKIRRELKEAGAERIWYIADAFRAGMSVDGVFNLTNVDRWFLVQIEELVRLEESVAELGINGLTAEFMRHLKRKGFADARLAKLVGAAESEVRKLRYKYGLHPVYKRVDTCAAEFSTDTAYMYSTYEEECESNPTSDRPKVMVLGGGPNRIGQGIEFDYCCVHASLALREDGYETIMVNCNPETVSTDYDTSDRLYFESVTLEDVLEIVRIEKPQGVIVQYGGQTPLKLARELEAAGVPIIGTSPDAIDRAEDRERFQQAVNRLGLKQPANATVATIEQAVEKATGLGYPLVVRPSYVLGGRAMEIVYDEIDLRRYFQNAVSVSNDAPVLLDRFLDDAVEVDVDAICDGERVLIGGIMEHIEQAGVHSGDSACSLPAYTLSKEIQDVMRQQVEKLAFELCVRGLMNVQFAVKNNEVYLIEVNPRAARTVPFVSKATGMPLAKIAARVMVGQSLAEQGMLEEIIPPYYSVKEVVLPFNKFPGVDPILGPEMRSTGEVMGVGRTFAEAFSKAMLGSQSGMKKSGRALLSVREGDKHRVVDLAAKLLKQGFELDATHGTAVVLGEAGINPRLVNKVHEGRPHIQDRIKNGEYTYIVNTTAGRQAIEDSKLIRRSALQYKVHYDTTLNGGFATAMALNADPTDQVISVQEMHAKIKNMKA.

Residues 2-403 (PKRTDIKSIL…SLQKALRGLE (402 aa)) form a carboxyphosphate synthetic domain region. Residues Arg-129, Arg-169, Gly-175, Gly-176, Glu-208, Leu-210, Glu-215, Gly-241, Ile-242, His-243, Gln-285, and Glu-299 each coordinate ATP. Residues 133–328 (DIAMKKIGLD…IAKIAAKLAV (196 aa)) form the ATP-grasp 1 domain. Residues Gln-285, Glu-299, and Asn-301 each contribute to the Mg(2+) site. Mn(2+) is bound by residues Gln-285, Glu-299, and Asn-301. The tract at residues 404 to 553 (VGATGFDPKV…YSTYEEECES (150 aa)) is oligomerization domain. Residues 554 to 936 (NPTSDRPKVM…AFSKAMLGSQ (383 aa)) are carbamoyl phosphate synthetic domain. The ATP-grasp 2 domain maps to 679 to 870 (QQAVNRLGLK…LAKIAARVMV (192 aa)). ATP contacts are provided by Arg-715, Arg-754, Leu-756, Glu-761, Gly-786, Val-787, His-788, Ser-789, Gln-829, and Glu-841. Residues Gln-829, Glu-841, and Asn-843 each coordinate Mg(2+). Residues Gln-829, Glu-841, and Asn-843 each coordinate Mn(2+). Positions 937–1077 (SGMKKSGRAL…MHAKIKNMKA (141 aa)) constitute an MGS-like domain. The interval 937 to 1077 (SGMKKSGRAL…MHAKIKNMKA (141 aa)) is allosteric domain.

Belongs to the CarB family. In terms of assembly, composed of two chains; the small (or glutamine) chain promotes the hydrolysis of glutamine to ammonia, which is used by the large (or ammonia) chain to synthesize carbamoyl phosphate. Tetramer of heterodimers (alpha,beta)4. Requires Mg(2+) as cofactor. The cofactor is Mn(2+).

The enzyme catalyses hydrogencarbonate + L-glutamine + 2 ATP + H2O = carbamoyl phosphate + L-glutamate + 2 ADP + phosphate + 2 H(+). It carries out the reaction hydrogencarbonate + NH4(+) + 2 ATP = carbamoyl phosphate + 2 ADP + phosphate + 2 H(+). It participates in amino-acid biosynthesis; L-arginine biosynthesis; carbamoyl phosphate from bicarbonate: step 1/1. Its pathway is pyrimidine metabolism; UMP biosynthesis via de novo pathway; (S)-dihydroorotate from bicarbonate: step 1/3. In terms of biological role, large subunit of the glutamine-dependent carbamoyl phosphate synthetase (CPSase). CPSase catalyzes the formation of carbamoyl phosphate from the ammonia moiety of glutamine, carbonate, and phosphate donated by ATP, constituting the first step of 2 biosynthetic pathways, one leading to arginine and/or urea and the other to pyrimidine nucleotides. The large subunit (synthetase) binds the substrates ammonia (free or transferred from glutamine from the small subunit), hydrogencarbonate and ATP and carries out an ATP-coupled ligase reaction, activating hydrogencarbonate by forming carboxy phosphate which reacts with ammonia to form carbamoyl phosphate. This chain is Carbamoyl phosphate synthase large chain, found in Yersinia pestis.